The sequence spans 137 residues: Small ribosomal subunit protein uS11 (137 aa).

The span at 1–11 (MAKQAKAGAAR) shows a compositional bias: low complexity. The disordered stretch occupies residues 1 to 32 (MAKQAKAGAARRPQRGRRRERKNVPRGQAHVQ). Residues 12-21 (RPQRGRRRER) show a composition bias toward basic residues.

This sequence belongs to the universal ribosomal protein uS11 family. As to quaternary structure, part of the 30S ribosomal subunit. Interacts with proteins S7 and S18. Binds to IF-3.

Functionally, located on the platform of the 30S subunit, it bridges several disparate RNA helices of the 16S rRNA. Forms part of the Shine-Dalgarno cleft in the 70S ribosome. This is Small ribosomal subunit protein uS11 from Herpetosiphon aurantiacus (strain ATCC 23779 / DSM 785 / 114-95).